Here is a 362-residue protein sequence, read N- to C-terminus: Putative protein ARB2BP (362 aa).

A helical transmembrane segment spans residues I229–L245.

Belongs to the ARB2 family.

The protein localises to the membrane. The protein is Putative protein ARB2BP of Homo sapiens (Human).